Consider the following 1482-residue polypeptide: MRGRRQEDIATTSSAPSTSTSHKKKTVSSNGSFRPRTQSNPGGKMEMYDHFYKNFQRPPMAPVYYPTSEEFADPIEYVAKIRPDAERYGVVKIVPPSDFKPPFAIDKEKFTFRPRTQKLNEVEAIVKEKHTFIERLVNFNRYSGLQFEFPVDRDGNVVDLYRLHRIVQNFGGCEEVNDEERWRDVAREYLPKEQMTRGVPSYFINLIRAHYNLHIEPFNRNLKEKAMKNEDESDDELEELKHKYQHHHGTMRSEPENTDGKNTEDVEEECPMSMQSGRRRSKNKKPVPAKKSSNGTPKKGSRGKKNSKTEEDEEENEDVIEQVYCVSCNEGKDEDLLLLCDIEGCNSGRHTYCCDPVLDEVPEGEWRCPKCIESEDAKIGLDWGFYDAETEYNLNTFTEFANKWKCDYFGVDNVSKVSCDALEKEFWKNVVSHDNPVAVKYGADLITSRVGSGFPRKEDKHTGPDSKLKQQYANHAWNLNNMPVLSESVLSYFNTGISGMMVPWVYVGMCFSTFCWHTEDHWTYSVNYNHFGERKIWYGVGGDDAEKFEEALKRLAPGLTGRQRDLFHHMTTAANPSLLRSLGVPIYSVHQNAGEFVITFPRAYHAGYNEGLNFAEAVNFAPIDWLAKGRECVQSYSNVRRYLVFSHDELLFKMIEAMDRLGLSTTLAAYDELKRVIEKQKRLRQFIAQLGVPARNVEQVAFEKIPDEQRSCRFCKTTLFMCALICNKHKRMTCVEHHDHLCKTCTPKDYKYQYRYEIDNLTHLFDELGKRTVDTAGWQEDDDDMYTQEEMPKLEPMVDLYNVEEQSSSRQKNQVHNIIAIQHTAKSAIEKANQLLFKKVRTRTKTRCQRADTRTDADGVKSLIEQMQGMDCNLSGLIDKLQKFLDQIDAWRSKAQIMMSQEHKYSKDDFEHFIEEGDEYDIKLSEIEELRKVVGMKEWSERAIEITSWAPTSNMEKDIDFEYKMRYTNKDVIALIREGSRSSSNHTSQLIAKLQHMLAEANKREAEATEYFDNPSLDKLQSIWKNLRTSDWFYEPYINLVRFEIGQIAKIKSMIDSTIPALSGLDLKPQLLRLGDSSITFAKAVELSKACELSKTLHKSQEHSSLLELINRMNLFTERIAKLFKPMNSYHNLFEIVSERDDLTPLAEGQVLQLYYQGETINSGNEWHQIKDFDSLEQMLHHQSSLREMQSRIFEKVKQTNSARGLEGCCCLGGNKSDSSESVLSCIMCESQFHVRCCEWSTFFQHLPKGCFMCVRCLRGQRPVIDDVANALNGTPSGCMETHLVRNLIQKSRIITQNLMDCSNKRQSGEVASDEMCKKALFDWLACEIMNPNGLPKAVELIHEFFGDYLEKQASAALELQQRPVKSKPSASLFDPKLNSKRKRPNPSQKDSSKSKSRKRQGQISPIDYCEEETEFKSCQARSCLKPFGDSVNWVMCDAGCKNWFHVICVGFTLREINDMHEYRCSSCLDHADSPASSVSTE.

The segment at 1 to 45 (MRGRRQEDIATTSSAPSTSTSHKKKTVSSNGSFRPRTQSNPGGKM) is disordered. The segment covering 11-20 (TTSSAPSTST) has biased composition (low complexity). The segment covering 30–41 (NGSFRPRTQSNP) has biased composition (polar residues). Positions 61–102 (APVYYPTSEEFADPIEYVAKIRPDAERYGVVKIVPPSDFKPP) constitute a JmjN domain. The ARID domain maps to 126–223 (VKEKHTFIER…HIEPFNRNLK (98 aa)). The interval 244–316 (YQHHHGTMRS…SKTEEDEEEN (73 aa)) is disordered. The span at 251-264 (MRSEPENTDGKNTE) shows a compositional bias: basic and acidic residues. A compositionally biased stretch (basic residues) spans 277–288 (GRRRSKNKKPVP). Residues 322–374 (QVYCVSCNEGKDEDLLLLCDIEGCNSGRHTYCCDPVLDEVPEGEWRCPKCIES) form a PHD-type 1 zinc finger. The region spanning 471–637 (QYANHAWNLN…KGRECVQSYS (167 aa)) is the JmjC domain. 3 residues coordinate Fe cation: histidine 517, aspartate 520, and histidine 605. Residues 1206-1260 (LEGCCCLGGNKSDSSESVLSCIMCESQFHVRCCEWSTFFQHLPKGCFMCVRCLRG) form a PHD-type 2 zinc finger. Positions 1361–1403 (QQRPVKSKPSASLFDPKLNSKRKRPNPSQKDSSKSKSRKRQGQ) are disordered. Residues 1416–1471 (FKSCQARSCLKPFGDSVNWVMCDAGCKNWFHVICVGFTLREINDMHEYRCSSCLDH) form a PHD-type 3 zinc finger.

It belongs to the JARID1 histone demethylase family. Fe(2+) is required as a cofactor.

The protein localises to the nucleus. The enzyme catalyses N(6),N(6),N(6)-trimethyl-L-lysyl(4)-[histone H3] + 3 2-oxoglutarate + 3 O2 = L-lysyl(4)-[histone H3] + 3 formaldehyde + 3 succinate + 3 CO2. Functionally, histone demethylase that specifically demethylates 'Lys-4' of histone H3, thereby playing a central role in histone code. Does not demethylate histone H3 'Lys-9', H3 'Lys-27', H3 'Lys-36', H3 'Lys-79' or H4 'Lys-20'. Demethylates trimethylated and dimethylated but not monomethylated H3 'Lys-4'. Involved in larval development and vulva formation. The protein is Lysine-specific demethylase rbr-2 (rbr-2) of Caenorhabditis briggsae.